Consider the following 712-residue polypeptide: Elongation factor G (712 aa).

Residues 8-290 (TRYRNIGISA…AVIEFLPSPT (283 aa)) form the tr-type G domain. Residues 17–24 (AHIDAGKT), 88–92 (DTPGH), and 142–145 (NKMD) each bind GTP.

Belongs to the TRAFAC class translation factor GTPase superfamily. Classic translation factor GTPase family. EF-G/EF-2 subfamily.

Its subcellular location is the cytoplasm. Functionally, catalyzes the GTP-dependent ribosomal translocation step during translation elongation. During this step, the ribosome changes from the pre-translocational (PRE) to the post-translocational (POST) state as the newly formed A-site-bound peptidyl-tRNA and P-site-bound deacylated tRNA move to the P and E sites, respectively. Catalyzes the coordinated movement of the two tRNA molecules, the mRNA and conformational changes in the ribosome. The chain is Elongation factor G from Acinetobacter baumannii (strain AB0057).